A 269-amino-acid polypeptide reads, in one-letter code: Chromosome-partitioning protein Spo0J (269 aa).

The interval 1–20 is stimulates ATPase activity of Soj by 8%; it reads MSRKPSGLGRGLEALLPKTG. Residues 137–156 constitute a DNA-binding region (H-T-H motif); it reads QEEVARRVGKARSTVANALR. The tract at residues 223–269 is required for DNA-binding; may be responsible for dimerization; that stretch reads PSPLSLELSRHLGLPVRVVGGKKGKVVIQYRSLEELEALLRRLGYQA.

The protein belongs to the ParB family. As to quaternary structure, homodimer, probably via the C-terminal 46 residues. Dimerization of the N-terminal H-T-H region may require DNA-binding. Probably interacts with ATPase Soj.

Its function is as follows. Probably involved in chromosome partitioning. Binds to a plasmid centromere-like site parS. Stimulates the ATPase activity 10-fold of Soj; the first 20 residues may be responsible. In Thermus thermophilus (strain ATCC BAA-163 / DSM 7039 / HB27), this protein is Chromosome-partitioning protein Spo0J (spo0C).